Here is a 371-residue protein sequence, read N- to C-terminus: tRNA-specific 2-thiouridylase MnmA (371 aa).

ATP is bound by residues 13 to 20 (GMSGGVDS) and Met39. Residues 99-101 (NPD) form an interaction with target base in tRNA region. The active-site Nucleophile is the Cys104. An intrachain disulfide couples Cys104 to Cys200. Gly128 lines the ATP pocket. Residues 150 to 152 (KDQ) are interaction with tRNA. Residue Cys200 is the Cysteine persulfide intermediate of the active site. Residues 309–310 (RY) are interaction with tRNA.

It belongs to the MnmA/TRMU family.

It is found in the cytoplasm. It catalyses the reaction S-sulfanyl-L-cysteinyl-[protein] + uridine(34) in tRNA + AH2 + ATP = 2-thiouridine(34) in tRNA + L-cysteinyl-[protein] + A + AMP + diphosphate + H(+). In terms of biological role, catalyzes the 2-thiolation of uridine at the wobble position (U34) of tRNA, leading to the formation of s(2)U34. The polypeptide is tRNA-specific 2-thiouridylase MnmA (Bacillus subtilis (strain 168)).